The primary structure comprises 299 residues: Oxygen-dependent coproporphyrinogen-III oxidase (299 aa).

Ser-92 contributes to the substrate binding site. A divalent metal cation contacts are provided by His-96 and His-106. His-106 (proton donor) is an active-site residue. 108-110 (NVR) provides a ligand contact to substrate. Residues His-145 and His-175 each coordinate a divalent metal cation. Residues 240–275 (YVEFNLVWDRGTLFGLQTGGRTESILMSMPPLVRWE) form an important for dimerization region. Residue 258–260 (GGR) coordinates substrate.

The protein belongs to the aerobic coproporphyrinogen-III oxidase family. In terms of assembly, homodimer. A divalent metal cation serves as cofactor.

It is found in the cytoplasm. The catalysed reaction is coproporphyrinogen III + O2 + 2 H(+) = protoporphyrinogen IX + 2 CO2 + 2 H2O. The protein operates within porphyrin-containing compound metabolism; protoporphyrin-IX biosynthesis; protoporphyrinogen-IX from coproporphyrinogen-III (O2 route): step 1/1. Involved in the heme biosynthesis. Catalyzes the aerobic oxidative decarboxylation of propionate groups of rings A and B of coproporphyrinogen-III to yield the vinyl groups in protoporphyrinogen-IX. The chain is Oxygen-dependent coproporphyrinogen-III oxidase from Salmonella newport (strain SL254).